Here is a 201-residue protein sequence, read N- to C-terminus: ATP synthase subunit delta (201 aa).

Belongs to the ATPase delta chain family. As to quaternary structure, F-type ATPases have 2 components, F(1) - the catalytic core - and F(0) - the membrane proton channel. F(1) has five subunits: alpha(3), beta(3), gamma(1), delta(1), epsilon(1). F(0) has three main subunits: a(1), b(2) and c(10-14). The alpha and beta chains form an alternating ring which encloses part of the gamma chain. F(1) is attached to F(0) by a central stalk formed by the gamma and epsilon chains, while a peripheral stalk is formed by the delta and b chains.

The protein resides in the cell inner membrane. Its function is as follows. F(1)F(0) ATP synthase produces ATP from ADP in the presence of a proton or sodium gradient. F-type ATPases consist of two structural domains, F(1) containing the extramembraneous catalytic core and F(0) containing the membrane proton channel, linked together by a central stalk and a peripheral stalk. During catalysis, ATP synthesis in the catalytic domain of F(1) is coupled via a rotary mechanism of the central stalk subunits to proton translocation. Functionally, this protein is part of the stalk that links CF(0) to CF(1). It either transmits conformational changes from CF(0) to CF(1) or is implicated in proton conduction. This Xanthobacter autotrophicus (strain ATCC BAA-1158 / Py2) protein is ATP synthase subunit delta.